Reading from the N-terminus, the 74-residue chain is UPF0346 protein PEPE_1063 (74 aa).

This sequence belongs to the UPF0346 family.

This is UPF0346 protein PEPE_1063 from Pediococcus pentosaceus (strain ATCC 25745 / CCUG 21536 / LMG 10740 / 183-1w).